The following is a 359-amino-acid chain: DNA polymerase IV (359 aa).

In terms of domain architecture, UmuC spans 4–184 (IVHVDMDAFY…LPVNRIPGVG (181 aa)). D8 and D102 together coordinate Mg(2+). E103 is an active-site residue.

The protein belongs to the DNA polymerase type-Y family. In terms of assembly, monomer. It depends on Mg(2+) as a cofactor.

The protein resides in the cytoplasm. It carries out the reaction DNA(n) + a 2'-deoxyribonucleoside 5'-triphosphate = DNA(n+1) + diphosphate. Poorly processive, error-prone DNA polymerase involved in untargeted mutagenesis. Copies undamaged DNA at stalled replication forks, which arise in vivo from mismatched or misaligned primer ends. These misaligned primers can be extended by PolIV. Exhibits no 3'-5' exonuclease (proofreading) activity. May be involved in translesional synthesis, in conjunction with the beta clamp from PolIII. The chain is DNA polymerase IV from Xanthomonas campestris pv. campestris (strain 8004).